The following is a 335-amino-acid chain: Ornithine carbamoyltransferase (335 aa).

Carbamoyl phosphate-binding positions include 56–59 (STRT), Gln-83, Arg-107, and 134–137 (HPTQ). Residues Asn-168, Asp-232, and 236–237 (SM) each bind L-ornithine. Residues 274 to 275 (CL) and Arg-320 each bind carbamoyl phosphate.

The protein belongs to the aspartate/ornithine carbamoyltransferase superfamily. OTCase family.

The protein resides in the cytoplasm. It catalyses the reaction carbamoyl phosphate + L-ornithine = L-citrulline + phosphate + H(+). The protein operates within amino-acid biosynthesis; L-arginine biosynthesis; L-arginine from L-ornithine and carbamoyl phosphate: step 1/3. Its function is as follows. Reversibly catalyzes the transfer of the carbamoyl group from carbamoyl phosphate (CP) to the N(epsilon) atom of ornithine (ORN) to produce L-citrulline. The protein is Ornithine carbamoyltransferase of Yersinia pseudotuberculosis serotype I (strain IP32953).